Consider the following 60-residue polypeptide: Large ribosomal subunit protein uL30 (60 aa).

This sequence belongs to the universal ribosomal protein uL30 family. In terms of assembly, part of the 50S ribosomal subunit.

This Lysinibacillus sphaericus (strain C3-41) protein is Large ribosomal subunit protein uL30.